The primary structure comprises 321 residues: 6-phosphogluconolactonase-like protein 1 (321 aa).

Residues 36–85 (GKVSRSTQMSGTSLNGNGNTESKTMERVNSVRSNASSRGGSEDGATKKLK) form a disordered region. A compositionally biased stretch (polar residues) spans 39–57 (SRSTQMSGTSLNGNGNTES). Over residues 63-74 (VNSVRSNASSRG) the composition is skewed to low complexity. 2 positions are modified to phosphoserine: Ser-65 and Ser-68. Positions 75-85 (GSEDGATKKLK) are enriched in basic and acidic residues. Thr-320 carries the post-translational modification Phosphothreonine.

The protein belongs to the glucosamine/galactosamine-6-phosphate isomerase family. 6-phosphogluconolactonase subfamily.

The protein localises to the cytoplasm. Its subcellular location is the nucleus. Functionally, may be involved in regulation of tRNA subcellular distribution. The polypeptide is 6-phosphogluconolactonase-like protein 1 (SOL1) (Saccharomyces cerevisiae (strain ATCC 204508 / S288c) (Baker's yeast)).